The primary structure comprises 253 residues: Ribonuclease 3 (253 aa).

Residues 29–157 (VDELQKTIGH…MLGAVFLDAG (129 aa)) enclose the RNase III domain. Glu-70 is a binding site for Mg(2+). Asp-74 is a catalytic residue. 2 residues coordinate Mg(2+): Asp-143 and Glu-146. Glu-146 is an active-site residue. Positions 184 to 253 (DYKSQLQELT…AARAVATLDK (70 aa)) constitute a DRBM domain.

It belongs to the ribonuclease III family. Homodimer. The cofactor is Mg(2+).

The protein localises to the cytoplasm. It carries out the reaction Endonucleolytic cleavage to 5'-phosphomonoester.. Its function is as follows. Digests double-stranded RNA. Involved in the processing of primary rRNA transcript to yield the immediate precursors to the large and small rRNAs (23S and 16S). Processes some mRNAs, and tRNAs when they are encoded in the rRNA operon. Processes pre-crRNA and tracrRNA of type II CRISPR loci if present in the organism. This is Ribonuclease 3 from Nitratidesulfovibrio vulgaris (strain ATCC 29579 / DSM 644 / CCUG 34227 / NCIMB 8303 / VKM B-1760 / Hildenborough) (Desulfovibrio vulgaris).